A 118-amino-acid polypeptide reads, in one-letter code: Probable mitochondrial pyruvate carrier 2 (118 aa).

3 consecutive transmembrane segments (helical) span residues 19 to 35 (VHFWAPAMKWTLVLSGI), 50 to 66 (YAALCATGAIWTRWSLI), and 72 to 94 (YFNATVNFFLAIVGAVQVSRILV).

The protein belongs to the mitochondrial pyruvate carrier (MPC) (TC 2.A.105) family. In terms of assembly, the functional 150 kDa pyruvate import complex is a heteromer of mpc1 and mpc2.

Its subcellular location is the mitochondrion inner membrane. Mediates the uptake of pyruvate into mitochondria. This Schizosaccharomyces pombe (strain 972 / ATCC 24843) (Fission yeast) protein is Probable mitochondrial pyruvate carrier 2.